The primary structure comprises 221 residues: Ribonuclease 3 (221 aa).

In terms of domain architecture, RNase III spans 4-121 (LEQLEKKLGY…LWAAVYIDSG (118 aa)). Glu40 is a Mg(2+) binding site. The active site involves Asp44. The Mg(2+) site is built by Asp107 and Glu110. Glu110 is a catalytic residue. The 69-residue stretch at 151 to 219 (DYKTILQEIT…AEELIKLLEE (69 aa)) folds into the DRBM domain.

This sequence belongs to the ribonuclease III family. In terms of assembly, homodimer. Mg(2+) serves as cofactor.

Its subcellular location is the cytoplasm. The catalysed reaction is Endonucleolytic cleavage to 5'-phosphomonoester.. Digests double-stranded RNA. Involved in the processing of primary rRNA transcript to yield the immediate precursors to the large and small rRNAs (23S and 16S). Also processes some mRNAs, and tRNAs when they are encoded in the rRNA operon. Probably processes pre-crRNA and tracrRNA of type II CRISPR loci if present in the organism. This is Ribonuclease 3 (rnc) from Aquifex aeolicus (strain VF5).